A 108-amino-acid polypeptide reads, in one-letter code: Parvalbumin beta 1 (108 aa).

N-acetylalanine is present on A1. 2 consecutive EF-hand domains span residues 38–73 (KXXD…FCPK) and 77–108 (LTDA…LVKQ). The Ca(2+) site is built by D51, D53, S55, F57, E59, E62, D90, D92, D94, M96, and E101.

It belongs to the parvalbumin family.

Functionally, in muscle, parvalbumin is thought to be involved in relaxation after contraction. It binds two calcium ions. The sequence is that of Parvalbumin beta 1 from Oncorhynchus mykiss (Rainbow trout).